Reading from the N-terminus, the 427-residue chain is Enolase (427 aa).

Q162 lines the (2R)-2-phosphoglycerate pocket. The Proton donor role is filled by E204. Residues D241, E282, and D309 each contribute to the Mg(2+) site. (2R)-2-phosphoglycerate is bound by residues K334, R363, S364, and K385. Catalysis depends on K334, which acts as the Proton acceptor.

It belongs to the enolase family. Mg(2+) is required as a cofactor.

It is found in the cytoplasm. The protein resides in the secreted. The protein localises to the cell surface. The enzyme catalyses (2R)-2-phosphoglycerate = phosphoenolpyruvate + H2O. It participates in carbohydrate degradation; glycolysis; pyruvate from D-glyceraldehyde 3-phosphate: step 4/5. Its function is as follows. Catalyzes the reversible conversion of 2-phosphoglycerate (2-PG) into phosphoenolpyruvate (PEP). It is essential for the degradation of carbohydrates via glycolysis. The polypeptide is Enolase (Frankia alni (strain DSM 45986 / CECT 9034 / ACN14a)).